The primary structure comprises 1609 residues: Laminin subunit gamma-1 (1609 aa).

The N-terminal stretch at 1-33 (MRGSHRAAPALRPRGRLWPVLAVLAAAAAAGCA) is a signal peptide. A Laminin N-terminal domain is found at 46–285 (RPQRCMPEFV…AISDFAVGGR (240 aa)). Asn-60 and Asn-134 each carry an N-linked (GlcNAc...) asparagine glycan. 16 disulfide bridges follow: Cys-286–Cys-295, Cys-288–Cys-305, Cys-307–Cys-316, Cys-319–Cys-339, Cys-342–Cys-351, Cys-344–Cys-367, Cys-370–Cys-379, Cys-382–Cys-395, Cys-398–Cys-410, Cys-400–Cys-416, Cys-418–Cys-427, Cys-430–Cys-442, Cys-445–Cys-456, Cys-447–Cys-463, Cys-465–Cys-474, and Cys-477–Cys-492. 4 consecutive Laminin EGF-like domains span residues 286-341 (CKCN…ECLP), 342-397 (CDCN…ACSS), 398-444 (CHCS…GCRP), and 445-494 (CSCD…GCTP). The 10-residue stretch at 495-504 (CFCFGHSSVC) folds into the Laminin EGF-like 5; first part domain. The 176-residue stretch at 514–689 (SISSTFQIDE…PGVPATWVES (176 aa)) folds into the Laminin IV type A domain. 2 N-linked (GlcNAc...) asparagine glycosylation sites follow: Asn-576 and Asn-650. Residues 690 to 723 (CTCPVGYGGQFCEMCLSGYRRETPNLGPYSPCVL) form the Laminin EGF-like 5; second part domain. 24 cysteine pairs are disulfide-bonded: Cys-724–Cys-733, Cys-726–Cys-740, Cys-742–Cys-751, Cys-754–Cys-770, Cys-773–Cys-781, Cys-775–Cys-792, Cys-795–Cys-804, Cys-807–Cys-825, Cys-828–Cys-842, Cys-830–Cys-849, Cys-852–Cys-861, Cys-864–Cys-881, Cys-884–Cys-898, Cys-886–Cys-905, Cys-907–Cys-916, Cys-919–Cys-932, Cys-935–Cys-947, Cys-937–Cys-954, Cys-956–Cys-965, Cys-968–Cys-980, Cys-983–Cys-995, Cys-985–Cys-1001, Cys-1003–Cys-1012, and Cys-1015–Cys-1028. Laminin EGF-like domains lie at 724 to 772 (CACN…DCQP), 773 to 827 (CPCP…LCRL), 828 to 883 (CQCS…KCKA), 884 to 934 (CNCN…GCER), 935 to 982 (CDCH…GCKP), and 983 to 1030 (CDCH…GCQE). Residues Asn-1022 and Asn-1107 are each glycosylated (N-linked (GlcNAc...) asparagine). Residues 1030–1609 (ECPACYRLVK…CFNTPSIEKP (580 aa)) form a domain II and I region. Positions 1038-1609 (VKDKVADHRV…CFNTPSIEKP (572 aa)) form a coiled coil. Ser-1149 is subject to Phosphoserine; by FAM20C. N-linked (GlcNAc...) asparagine glycosylation is found at Asn-1161, Asn-1175, Asn-1205, Asn-1223, Asn-1241, Asn-1380, Asn-1395, and Asn-1439. At Ser-1493 the chain carries Phosphoserine.

As to quaternary structure, laminin is a complex glycoprotein, consisting of three different polypeptide chains (alpha, beta, gamma), which are bound to each other by disulfide bonds into a cross-shaped molecule comprising one long and three short arms with globules at each end. Gamma-1 is a subunit of laminin-1 (laminin-111 or EHS laminin), laminin-2 (laminin-211 or merosin), laminin-3 (laminin-121 or S-laminin), laminin-4 (laminin-221 or S-merosin), laminin-6 (laminin-311 or K-laminin), laminin-7 (laminin-321 or KS-laminin), laminin-8 (laminin-411), laminin-9 (laminin-421), laminin-10 (laminin-511) and laminin-11 (laminin-521). Interacts with SVEP1. Found in the basement membranes (major component).

Its subcellular location is the secreted. The protein resides in the extracellular space. The protein localises to the extracellular matrix. It is found in the basement membrane. In terms of biological role, binding to cells via a high affinity receptor, laminin is thought to mediate the attachment, migration and organization of cells into tissues during embryonic development by interacting with other extracellular matrix components. The protein is Laminin subunit gamma-1 of Homo sapiens (Human).